A 98-amino-acid chain; its full sequence is Trp operon repressor homolog (98 aa).

Residues Q59–A82 mediate DNA binding.

Belongs to the TrpR family. As to quaternary structure, homodimer.

It localises to the cytoplasm. This protein is an aporepressor. When complexed with L-tryptophan it binds the operator region of the trp operon and prevents the initiation of transcription. The polypeptide is Trp operon repressor homolog (Vibrio atlanticus (strain LGP32) (Vibrio splendidus (strain Mel32))).